The sequence spans 124 residues: MEIIPFGTNDIDNILAREPARAESLPFGAVLLDRMGRIAKYNKAEGLIAGRDPSTVIGRDFFNEIAPCAKGKRFHGEFLKFNRTGQANVMLDYKFNYKGAEVAVKIHLKSQPDGQFCWLFVKRA.

The PAS domain maps to 22 to 85 (AESLPFGAVL…GEFLKFNRTG (64 aa)). Cys-68 is modified (S-(4-hydroxycinnamyl)cysteine).

This sequence belongs to the photoactive yellow protein family. In terms of processing, the 4-hydroxycinnamic acid (p-coumaric acid) chromophore is covalently bound via a thioester linkage.

Functionally, this photoactive protein is a photoreceptor with kinetics similar to that of rhodopsin. This chain is Photoactive yellow protein (pyp), found in Rhodobacter capsulatus (strain ATCC BAA-309 / NBRC 16581 / SB1003).